Reading from the N-terminus, the 103-residue chain is Small ribosomal subunit protein uS10 (103 aa).

It belongs to the universal ribosomal protein uS10 family. In terms of assembly, part of the 30S ribosomal subunit.

Involved in the binding of tRNA to the ribosomes. The sequence is that of Small ribosomal subunit protein uS10 from Cellvibrio japonicus (strain Ueda107) (Pseudomonas fluorescens subsp. cellulosa).